Consider the following 270-residue polypeptide: 3-methyl-2-oxobutanoate hydroxymethyltransferase (270 aa).

The Mg(2+) site is built by Asp50 and Asp89. 3-methyl-2-oxobutanoate contacts are provided by residues 50 to 51 (DS), Asp89, and Lys118. Position 120 (Glu120) interacts with Mg(2+). Catalysis depends on Glu187, which acts as the Proton acceptor.

This sequence belongs to the PanB family. In terms of assembly, homodecamer; pentamer of dimers. The cofactor is Mg(2+).

The protein resides in the cytoplasm. The catalysed reaction is 3-methyl-2-oxobutanoate + (6R)-5,10-methylene-5,6,7,8-tetrahydrofolate + H2O = 2-dehydropantoate + (6S)-5,6,7,8-tetrahydrofolate. It functions in the pathway cofactor biosynthesis; (R)-pantothenate biosynthesis; (R)-pantoate from 3-methyl-2-oxobutanoate: step 1/2. Functionally, catalyzes the reversible reaction in which hydroxymethyl group from 5,10-methylenetetrahydrofolate is transferred onto alpha-ketoisovalerate to form ketopantoate. The chain is 3-methyl-2-oxobutanoate hydroxymethyltransferase from Helicobacter pylori (strain HPAG1).